Reading from the N-terminus, the 269-residue chain is 4-chlorobenzoyl coenzyme A dehalogenase (269 aa).

Substrate-binding positions include arginine 24 and 62 to 67 (AGFYLR). Residue histidine 90 is the Proton acceptor of the active site. Substrate is bound at residue glycine 114. Residue aspartate 145 is the Nucleophile of the active site. Residue arginine 257 coordinates substrate.

Belongs to the enoyl-CoA hydratase/isomerase family. As to quaternary structure, homotetramer. Homotetramer, homooctamer and larger multimers. Homotrimer.

The catalysed reaction is 4-chlorobenzoyl-CoA + H2O = 4-hydroxybenzoyl-CoA + chloride + H(+). Its pathway is xenobiotic degradation; 4-chlorobenzoate degradation; 4-hydroxybenzoate from 4-chlorobenzoate: step 2/3. With respect to regulation, inactivated by 1 mM Ag(+) and by 5 mM Cu(2+). Partially inhibited by 5 mM Zn(2+), Mn(2+), Co(2+), Fe(2+) and Ni(2+). Unaffected by 10 mM Na(+), K(+) and Li(+) and by 0.5 mM Mg(2+), Mn(2+), Fe(2+), Ca(2+), Co(2+) and Zn(2+). Inhibited by the sulfhydryl blocking agent 5,5'-dithio-bis-(2-nitrobenzoate), SDS and N-bromosuccinimide. Unaffected by sodium azide and EDTA. Inactivated following treatment with diethyl pyrocarbonate; this inactivation is reversible by treatment with hydroxylamine. Dehalogenates 4-chlorobenzoyl-CoA, 4-iodobenzoyl-CoA and 4-bromobenzoyl-CoA, but not 4-fluorobenzoyl-CoA. Inactive towards crotonyl-CoA, alpha-methylcrotonyl-CoA and beta-methylcrotonyl-CoA. This chain is 4-chlorobenzoyl coenzyme A dehalogenase, found in Pseudomonas sp. (strain CBS-3).